The sequence spans 350 residues: Inactive ADP-ribosyltransferase arh2 (350 aa).

Belongs to the ADP-ribosylglycohydrolase family.

The protein localises to the cytoplasm. It is found in the myofibril. It localises to the sarcomere. In terms of biological role, required for myofibril assembly and outgrowth of the cardiac chambers in the developing heart. Appears to be catalytically inactive, showing no activity against O-acetyl-ADP-ribose. This Danio rerio (Zebrafish) protein is Inactive ADP-ribosyltransferase arh2 (adprhl1).